The sequence spans 214 residues: MKFFIDTANIDEIKEANSMGMVDGVTTNPSLIAKEGRPFEDIIKDICAEVDGPISAEVISTEAKSMIEEGKKLAAIHKNIVIKIPMIPDGMIATRALSSEGIPVNVTLVFSPLQALVAAKAGAAFVSPFVGRLDDLANEGMLLIEQMVTIYNNYAFDTEVLVASVRNPLHVLEAAMMGADVATIPFGVIKKMMGHPLTDKGLAAFLADYEKSKK.

Lysine 83 (schiff-base intermediate with substrate) is an active-site residue.

Belongs to the transaldolase family. Type 3B subfamily.

The protein localises to the cytoplasm. It catalyses the reaction D-sedoheptulose 7-phosphate + D-glyceraldehyde 3-phosphate = D-erythrose 4-phosphate + beta-D-fructose 6-phosphate. The protein operates within carbohydrate degradation; pentose phosphate pathway; D-glyceraldehyde 3-phosphate and beta-D-fructose 6-phosphate from D-ribose 5-phosphate and D-xylulose 5-phosphate (non-oxidative stage): step 2/3. Its function is as follows. Transaldolase is important for the balance of metabolites in the pentose-phosphate pathway. The protein is Probable transaldolase of Desulfatibacillum aliphaticivorans.